We begin with the raw amino-acid sequence, 257 residues long: Imidazole glycerol phosphate synthase subunit HisF (257 aa).

Residues D11 and D130 contribute to the active site.

This sequence belongs to the HisA/HisF family. As to quaternary structure, heterodimer of HisH and HisF.

The protein localises to the cytoplasm. It catalyses the reaction 5-[(5-phospho-1-deoxy-D-ribulos-1-ylimino)methylamino]-1-(5-phospho-beta-D-ribosyl)imidazole-4-carboxamide + L-glutamine = D-erythro-1-(imidazol-4-yl)glycerol 3-phosphate + 5-amino-1-(5-phospho-beta-D-ribosyl)imidazole-4-carboxamide + L-glutamate + H(+). The protein operates within amino-acid biosynthesis; L-histidine biosynthesis; L-histidine from 5-phospho-alpha-D-ribose 1-diphosphate: step 5/9. In terms of biological role, IGPS catalyzes the conversion of PRFAR and glutamine to IGP, AICAR and glutamate. The HisF subunit catalyzes the cyclization activity that produces IGP and AICAR from PRFAR using the ammonia provided by the HisH subunit. The protein is Imidazole glycerol phosphate synthase subunit HisF of Shewanella sp. (strain ANA-3).